Here is a 306-residue protein sequence, read N- to C-terminus: tRNA pseudouridine synthase B (306 aa).

D48 serves as the catalytic Nucleophile.

The protein belongs to the pseudouridine synthase TruB family. Type 1 subfamily.

It carries out the reaction uridine(55) in tRNA = pseudouridine(55) in tRNA. Responsible for synthesis of pseudouridine from uracil-55 in the psi GC loop of transfer RNAs. The protein is tRNA pseudouridine synthase B of Chromobacterium violaceum (strain ATCC 12472 / DSM 30191 / JCM 1249 / CCUG 213 / NBRC 12614 / NCIMB 9131 / NCTC 9757 / MK).